A 128-amino-acid chain; its full sequence is Protein BEX1 (128 aa).

The disordered stretch occupies residues 1-55 (MESKDQGAKNLNMENDHQKKEEKEEKPQDTIKREPVVAPTFEAGKNCAPRGGRRR). Basic and acidic residues predominate over residues 14-35 (ENDHQKKEEKEEKPQDTIKREP). Phosphoserine; by PKB/AKT1 is present on Ser105. Residues 107-128 (SLRAVSTDPPHHDHHDEFCLMP) are disordered. Basic and acidic residues predominate over residues 115 to 128 (PPHHDHHDEFCLMP). A his cluster region spans residues 117-121 (HHDHH). Residue Cys125 coordinates Zn(2+).

Belongs to the BEX family. In terms of assembly, interacts with neurotrophin receptor p75NTR/NGFR. Interacts with OMP. Phosphorylated. Phosphorylation of Ser-105 protects it from the proteasome. Post-translationally, ubiquitinated. Degraded by the proteasome. Expressed in the central nervous system. Expressed in Schwann cells from newborn sciatic nerve.

It is found in the nucleus. Its subcellular location is the cytoplasm. In terms of biological role, signaling adapter molecule involved in p75NTR/NGFR signaling. Plays a role in cell cycle progression and neuronal differentiation. Inhibits neuronal differentiation in response to nerve growth factor (NGF). May act as a link between the cell cycle and neurotrophic factor signaling, possibly by functioning as an upstream modulator of receptor signaling, coordinating biological responses to external signals with internal cellular states. In absence of reductive stress, acts as a pseudosubstrate for the CRL2(FEM1B) complex: associates with FEM1B via zinc, thereby preventing association between FEM1B and its substrates. The protein is Protein BEX1 (Bex1) of Rattus norvegicus (Rat).